The primary structure comprises 363 residues: Putative C-&gt;U-editing enzyme APOBEC-4 (363 aa).

The CMP/dCMP-type deaminase domain maps to 61–177 (PQTKHLTFYE…AWNREALRSL (117 aa)). H93 provides a ligand contact to Zn(2+). The Proton donor role is filled by E95. The Zn(2+) site is built by C127 and C134.

Belongs to the cytidine and deoxycytidylate deaminase family. The cofactor is Zn(2+).

In terms of biological role, putative C to U editing enzyme whose physiological substrate is not yet known. The polypeptide is Putative C-&gt;U-editing enzyme APOBEC-4 (APOBEC4) (Macaca fascicularis (Crab-eating macaque)).